The primary structure comprises 390 residues: Protein shisa-9 (390 aa).

The N-terminal stretch at 1 to 22 is a signal peptide; the sequence is MTGIRAIFYYFLVDLLTLLCWA. Topologically, residues 23–134 are extracellular; the sequence is QGKGGQHFGS…DPSHDPTRDK (112 aa). Residues N40 and N74 are each glycosylated (N-linked (GlcNAc...) asparagine). A helical membrane pass occupies residues 135-155; that stretch reads TNLIVYIICGVVAVMVLVGIF. The Cytoplasmic portion of the chain corresponds to 156–390; it reads TKLGLEKAHR…VTNSKTEVTV (235 aa).

Belongs to the shisa family. SHISA9 subfamily. In terms of assembly, component of some AMPA receptors (ionotropic glutamate receptors) complex.

It localises to the cell projection. The protein localises to the dendritic spine membrane. Its subcellular location is the synapse. In terms of biological role, regulator of short-term neuronal synaptic plasticity in the dentate gyrus. Associates with AMPA receptors (ionotropic glutamate receptors) in synaptic spines and promotes AMPA receptor desensitization at excitatory synapses. This Xenopus tropicalis (Western clawed frog) protein is Protein shisa-9 (shisa9).